The chain runs to 25 residues: Small ribosomal subunit protein eS32 (25 aa).

Residues 1–25 form a disordered region; it reads MRDKWRKKRVRRLKRKRRKVRARSK.

It belongs to the eukaryotic ribosomal protein eS32 family. In terms of assembly, component of the small ribosomal subunit. Mature ribosomes consist of a small (40S) and a large (60S) subunit. The 40S subunit contains about 32 different proteins and 1 molecule of RNA (18S). The 60S subunit contains 45 different proteins and 3 molecules of RNA (25S, 5.8S and 5S).

Its subcellular location is the cytoplasm. Functionally, component of the ribosome, a large ribonucleoprotein complex responsible for the synthesis of proteins in the cell. The small ribosomal subunit (SSU) binds messenger RNAs (mRNAs) and translates the encoded message by selecting cognate aminoacyl-transfer RNA (tRNA) molecules. The large subunit (LSU) contains the ribosomal catalytic site termed the peptidyl transferase center (PTC), which catalyzes the formation of peptide bonds, thereby polymerizing the amino acids delivered by tRNAs into a polypeptide chain. The nascent polypeptides leave the ribosome through a tunnel in the LSU and interact with protein factors that function in enzymatic processing, targeting, and the membrane insertion of nascent chains at the exit of the ribosomal tunnel. This Candida albicans (strain SC5314 / ATCC MYA-2876) (Yeast) protein is Small ribosomal subunit protein eS32.